Consider the following 31-residue polypeptide: Cytochrome b6-f complex subunit 6 (31 aa).

A helical transmembrane segment spans residues 4 to 26 (ITSYFGFLLAASTITPALLIGLN).

This sequence belongs to the PetL family. In terms of assembly, the 4 large subunits of the cytochrome b6-f complex are cytochrome b6, subunit IV (17 kDa polypeptide, PetD), cytochrome f and the Rieske protein, while the 4 small subunits are PetG, PetL, PetM and PetN. The complex functions as a dimer.

Its subcellular location is the plastid. It localises to the chloroplast thylakoid membrane. Functionally, component of the cytochrome b6-f complex, which mediates electron transfer between photosystem II (PSII) and photosystem I (PSI), cyclic electron flow around PSI, and state transitions. PetL is important for photoautotrophic growth as well as for electron transfer efficiency and stability of the cytochrome b6-f complex. The polypeptide is Cytochrome b6-f complex subunit 6 (Calycanthus floridus var. glaucus (Eastern sweetshrub)).